The sequence spans 567 residues: Protein ESMERALDA 1 (567 aa).

The interval 1-41 (MLAKNRLPGSGHTTPSPPASPRRSPRYRHGRSKAAAGSRFP) is disordered. Over 1-65 (MLAKNRLPGS…ILLSVLLRRQ (65 aa)) the chain is Cytoplasmic. The segment covering 23 to 32 (RSPRYRHGRS) has biased composition (basic residues). A helical; Signal-anchor for type II membrane protein membrane pass occupies residues 66–86 (GIFLFAPLIYISCMLLYMGTV). The Lumenal segment spans residues 87–567 (SFDVVPIIQR…TPESRPPPAT (481 aa)). N121, N145, N184, and N238 each carry an N-linked (GlcNAc...) asparagine glycan. 331 to 333 (HLR) lines the substrate pocket. N-linked (GlcNAc...) asparagine glycans are attached at residues N403, N419, N449, N538, and N554.

It belongs to the glycosyltransferase GT106 family. As to expression, ubiquitous.

The protein localises to the golgi apparatus membrane. The protein operates within protein modification; protein glycosylation. Its function is as follows. Glycosyltransferase that plays a role in cell adhesion. The chain is Protein ESMERALDA 1 from Arabidopsis thaliana (Mouse-ear cress).